The primary structure comprises 195 residues: Shikimate kinase (195 aa).

ATP is bound at residue 21-26; it reads GTGKTS. A Mg(2+)-binding site is contributed by threonine 25. Positions 43, 67, and 89 each coordinate substrate. The tract at residues 128 to 148 is disordered; that stretch reads REQRPSFSGKASTEISEETMR. Arginine 131 is a binding site for ATP. Positions 132–141 are enriched in polar residues; that stretch reads PSFSGKASTE. Arginine 158 lines the substrate pocket.

Belongs to the shikimate kinase family. In terms of assembly, monomer. Mg(2+) serves as cofactor.

It localises to the cytoplasm. The catalysed reaction is shikimate + ATP = 3-phosphoshikimate + ADP + H(+). The protein operates within metabolic intermediate biosynthesis; chorismate biosynthesis; chorismate from D-erythrose 4-phosphate and phosphoenolpyruvate: step 5/7. Functionally, catalyzes the specific phosphorylation of the 3-hydroxyl group of shikimic acid using ATP as a cosubstrate. The polypeptide is Shikimate kinase (Syntrophus aciditrophicus (strain SB)).